We begin with the raw amino-acid sequence, 249 residues long: Triosephosphate isomerase (249 aa).

9 to 11 contributes to the substrate binding site; sequence NWK. Residue histidine 95 is the Electrophile of the active site. The active-site Proton acceptor is glutamate 165. Substrate contacts are provided by residues glycine 171, serine 210, and 231 to 232; that span reads GG.

The protein belongs to the triosephosphate isomerase family. In terms of assembly, homodimer.

The protein resides in the cytoplasm. The enzyme catalyses D-glyceraldehyde 3-phosphate = dihydroxyacetone phosphate. It functions in the pathway carbohydrate biosynthesis; gluconeogenesis. The protein operates within carbohydrate degradation; glycolysis; D-glyceraldehyde 3-phosphate from glycerone phosphate: step 1/1. Its function is as follows. Involved in the gluconeogenesis. Catalyzes stereospecifically the conversion of dihydroxyacetone phosphate (DHAP) to D-glyceraldehyde-3-phosphate (G3P). This is Triosephosphate isomerase from Hyphomonas neptunium (strain ATCC 15444).